The chain runs to 112 residues: Large ribosomal subunit protein uL24 (112 aa).

The protein belongs to the universal ribosomal protein uL24 family. In terms of assembly, part of the 50S ribosomal subunit.

One of two assembly initiator proteins, it binds directly to the 5'-end of the 23S rRNA, where it nucleates assembly of the 50S subunit. In terms of biological role, one of the proteins that surrounds the polypeptide exit tunnel on the outside of the subunit. In Desulfitobacterium hafniense (strain Y51), this protein is Large ribosomal subunit protein uL24.